We begin with the raw amino-acid sequence, 258 residues long: Tryptophan synthase alpha chain (258 aa).

Residues E52 and D63 each act as proton acceptor in the active site.

The protein belongs to the TrpA family. Tetramer of two alpha and two beta chains.

The enzyme catalyses (1S,2R)-1-C-(indol-3-yl)glycerol 3-phosphate + L-serine = D-glyceraldehyde 3-phosphate + L-tryptophan + H2O. It functions in the pathway amino-acid biosynthesis; L-tryptophan biosynthesis; L-tryptophan from chorismate: step 5/5. In terms of biological role, the alpha subunit is responsible for the aldol cleavage of indoleglycerol phosphate to indole and glyceraldehyde 3-phosphate. In Streptococcus pneumoniae (strain Taiwan19F-14), this protein is Tryptophan synthase alpha chain.